Reading from the N-terminus, the 204-residue chain is Putative AgrB-like protein (204 aa).

4 helical membrane passes run 52 to 74 (YGIA…YLWL), 87 to 107 (LNCT…FQNV), 111 to 131 (NWIV…FAPA), and 156 to 176 (LILT…LIMI).

The protein belongs to the AgrB family.

The protein localises to the cell membrane. May be involved in the proteolytic processing of a quorum sensing system signal molecule precursor. This chain is Putative AgrB-like protein, found in Listeria monocytogenes serotype 4a (strain HCC23).